A 67-amino-acid polypeptide reads, in one-letter code: SPbeta prophage-derived uncharacterized protein YoqF (67 aa).

The polypeptide is SPbeta prophage-derived uncharacterized protein YoqF (yoqF) (Bacillus subtilis (strain 168)).